A 274-amino-acid chain; its full sequence is Hydroxyacylglutathione hydrolase, cytoplasmic isozyme (274 aa).

6 residues coordinate Zn(2+): His59, His61, Asp63, His64, His121, and Asp144. Residues Arg153 and 188–190 (HEY) contribute to the substrate site. His188 provides a ligand contact to Zn(2+). A Phosphoserine modification is found at Ser257. 268-271 (RAMK) contacts substrate.

It belongs to the metallo-beta-lactamase superfamily. Glyoxalase II family. Zn(2+) is required as a cofactor.

The protein resides in the cytoplasm. It carries out the reaction an S-(2-hydroxyacyl)glutathione + H2O = a 2-hydroxy carboxylate + glutathione + H(+). The enzyme catalyses (R)-S-lactoylglutathione + H2O = (R)-lactate + glutathione + H(+). The protein operates within secondary metabolite metabolism; methylglyoxal degradation; (R)-lactate from methylglyoxal: step 2/2. Inhibited by various thiol compounds such as glutathione and coenzyme A. Its function is as follows. Thiolesterase that catalyzes the hydrolysis of S-D-lactoylglutathione to form glutathione and D-lactic acid. Involved in the metabolism of methylglyoxal, a toxic compound for yeast proliferation, by converting methylglyoxal to lactate via S-D-lactoylglutathione by sequential enzyme reactions catalyzed by glyoxalase I and glyoxalase II. This Saccharomyces cerevisiae (strain ATCC 204508 / S288c) (Baker's yeast) protein is Hydroxyacylglutathione hydrolase, cytoplasmic isozyme.